The chain runs to 338 residues: Protein mono-ADP-ribosyltransferase PARP11 (338 aa).

Glutamate 13 bears the ADP-ribosyl glutamic acid mark. Lysine 18 carries the N6-(ADP-ribosyl)lysine modification. One can recognise a WWE domain in the interval 22-106 (NEVDDMDTSD…TTGKQRLIKR (85 aa)). ADP-ribosylcysteine occurs at positions 56 and 72. Aspartate 87 is modified (ADP-ribosyl aspartic acid). The region spanning 123-338 (IPMPPHWENV…IYPEYLIDFH (216 aa)) is the PARP catalytic domain.

Belongs to the ARTD/PARP family. In terms of assembly, interacts with PARP12; this interaction plays a role in zika virus suppression. In terms of processing, auto-mono-ADP-ribosylated.

The protein localises to the nucleus. The protein resides in the nuclear pore complex. It catalyses the reaction L-aspartyl-[protein] + NAD(+) = 4-O-(ADP-D-ribosyl)-L-aspartyl-[protein] + nicotinamide. It carries out the reaction L-cysteinyl-[protein] + NAD(+) = S-(ADP-D-ribosyl)-L-cysteinyl-[protein] + nicotinamide + H(+). The catalysed reaction is L-glutamyl-[protein] + NAD(+) = 5-O-(ADP-D-ribosyl)-L-glutamyl-[protein] + nicotinamide. The enzyme catalyses L-lysyl-[protein] + NAD(+) = N(6)-(ADP-D-ribosyl)-L-lysyl-[protein] + nicotinamide + H(+). Mono-ADP-ribosyltransferase that mediates mono-ADP-ribosylation of target proteins. Plays a role in nuclear envelope stability and nuclear remodeling during spermiogenesis. Inhibits the type I interferon activated signaling pathway. Mechanistically, mono-ADP-ribosylates beta-TrCP/BTRC to promote IFNAR1 ubiquitination and protect BTRC from ubiquitin-proteasome degradation. Additionally, acts as an antiviral factor by cooperating with PARP12 to suppress Zika virus replication, independent of IFNAR1 regulation or intrinsic PARP enzymatic activity. Instead, facilitates the degradation of viral NS1 and NS3 proteins, potentially disrupting viral replication. The sequence is that of Protein mono-ADP-ribosyltransferase PARP11 from Homo sapiens (Human).